The primary structure comprises 1323 residues: Glutamate receptor ionotropic, NMDA 2D (1323 aa).

A signal peptide spans M1–P27. The Extracellular portion of the chain corresponds to F28–S579. N89 carries an N-linked (GlcNAc...) asparagine glycan. C101 and C345 are oxidised to a cystine. Residues N349, N363, N381, and N464 are each glycosylated (N-linked (GlcNAc...) asparagine). Cystine bridges form between C452/C480 and C459/C481. L-glutamate contacts are provided by S536, T538, and R543. N566 carries an N-linked (GlcNAc...) asparagine glycan. A helical transmembrane segment spans residues P580–F601. Over E602–I626 the chain is Cytoplasmic. The discontinuously helical intramembrane region spans G627 to F638. The tract at residues K628–P647 is pore-forming. Residues N639–T650 lie on the Cytoplasmic side of the membrane. A helical transmembrane segment spans residues T651–T671. The Extracellular segment spans residues A672–D840. Residue N712 is glycosylated (N-linked (GlcNAc...) asparagine). Residues S714, T715, and D756 each coordinate L-glutamate. Cysteines 770 and 825 form a disulfide. Residues N841–H864 form a helical membrane-spanning segment. Residues L865–V1323 are Cytoplasmic-facing. 3 disordered regions span residues E897 to A952, A977 to G1112, and P1201 to V1323. Over residues A899–F929 the composition is skewed to pro residues. Residues P931 to W940 show a composition bias toward basic and acidic residues. Over residues A977–P986 the composition is skewed to low complexity. A compositionally biased stretch (pro residues) spans L987–S1001. The segment covering A1030–P1039 has biased composition (low complexity). Over residues T1080–C1092 the composition is skewed to pro residues. Residues P1208–H1228 are compositionally biased toward basic residues. R1303 is subject to Omega-N-methylarginine. A Phosphoserine modification is found at S1313. Positions S1321–V1323 match the PDZ-binding motif.

This sequence belongs to the glutamate-gated ion channel (TC 1.A.10.1) family. NR2D/GRIN2D subfamily. Heterotetramer. Forms heterotetrameric channels composed of two GluN1/zeta subunits (GRIN1), and two identical GluN2/epsilon subunits (GRIN2A, GRIN2B, GRIN2C or GRIN2D) or GluN3 subunits (GRIN3A or GRIN3B) (in vitro). In vivo, the subunit composition may depend on the expression levels of the different subunits. Interacts with PDZ domains of PATJ and DLG4. In terms of tissue distribution, expressed in brain, mainly in the subcortical region.

The protein localises to the cell membrane. It is found in the postsynaptic cell membrane. The enzyme catalyses Ca(2+)(in) = Ca(2+)(out). It carries out the reaction Na(+)(in) = Na(+)(out). It catalyses the reaction K(+)(in) = K(+)(out). In terms of biological role, component of N-methyl-D-aspartate (NMDA) receptors (NMDARs) that function as heterotetrameric, ligand-gated cation channels with high calcium permeability and voltage-dependent block by Mg(2+). Participates in synaptic plasticity for learning and memory formation. Channel activation requires binding of the neurotransmitter L-glutamate to the GluN2 subunit, glycine or D-serine binding to the GluN1 subunit, plus membrane depolarization to eliminate channel inhibition by Mg(2+). NMDARs mediate simultaneously the potasium efflux and the influx of calcium and sodium. Each GluN2 subunit confers differential attributes to channel properties, including activation, deactivation and desensitization kinetics, pH sensitivity, Ca2(+) permeability, and binding to allosteric modulators. This is Glutamate receptor ionotropic, NMDA 2D from Rattus norvegicus (Rat).